Consider the following 215-residue polypeptide: 3,4-dihydroxy-2-butanone 4-phosphate synthase (215 aa).

D-ribulose 5-phosphate-binding positions include 37-38 (RE), Asp42, 150-154 (RRGHT), and Glu175. A Mg(2+)-binding site is contributed by Glu38. Residue His153 coordinates Mg(2+).

It belongs to the DHBP synthase family. In terms of assembly, homodimer. Mg(2+) serves as cofactor. It depends on Mn(2+) as a cofactor.

The catalysed reaction is D-ribulose 5-phosphate = (2S)-2-hydroxy-3-oxobutyl phosphate + formate + H(+). It functions in the pathway cofactor biosynthesis; riboflavin biosynthesis; 2-hydroxy-3-oxobutyl phosphate from D-ribulose 5-phosphate: step 1/1. Functionally, catalyzes the conversion of D-ribulose 5-phosphate to formate and 3,4-dihydroxy-2-butanone 4-phosphate. This Desulfatibacillum aliphaticivorans protein is 3,4-dihydroxy-2-butanone 4-phosphate synthase.